Here is a 146-residue protein sequence, read N- to C-terminus: Putative pre-16S rRNA nuclease (146 aa).

It belongs to the YqgF nuclease family.

It is found in the cytoplasm. In terms of biological role, could be a nuclease involved in processing of the 5'-end of pre-16S rRNA. The polypeptide is Putative pre-16S rRNA nuclease (Mycoplasmopsis pulmonis (strain UAB CTIP) (Mycoplasma pulmonis)).